The following is a 587-amino-acid chain: Probable pectinesterase/pectinesterase inhibitor 61 (587 aa).

The disordered stretch occupies residues 1–23; that stretch reads MGYDRLGPSGPSNPNQKDPATSL. The span at 10–19 shows a compositional bias: polar residues; sequence GPSNPNQKDP. Residues 35–55 traverse the membrane as a helical segment; sequence ILFTLAVLVVGVVCFGIFAGI. The tract at residues 69–223 is pectinesterase inhibitor 61; it reads RKPTQAISRT…SEMVSNCLAI (155 aa). Positions 273 to 571 are pectinesterase 61; the sequence is DITVSKDGSG…FTVAQFISGS (299 aa). The substrate site is built by T349 and Q379. The active-site Proton donor; for pectinesterase activity is D402. C416 and C436 are joined by a disulfide. D423 serves as the catalytic Nucleophile; for pectinesterase activity. R491 and W493 together coordinate substrate.

The protein in the N-terminal section; belongs to the PMEI family. It in the C-terminal section; belongs to the pectinesterase family. In terms of tissue distribution, expressed in siliques, floral stems and rosettes leaves.

It is found in the membrane. The enzyme catalyses [(1-&gt;4)-alpha-D-galacturonosyl methyl ester](n) + n H2O = [(1-&gt;4)-alpha-D-galacturonosyl](n) + n methanol + n H(+). The protein operates within glycan metabolism; pectin degradation; 2-dehydro-3-deoxy-D-gluconate from pectin: step 1/5. Acts in the modification of cell walls via demethylesterification of cell wall pectin. This chain is Probable pectinesterase/pectinesterase inhibitor 61 (PME61), found in Arabidopsis thaliana (Mouse-ear cress).